Consider the following 58-residue polypeptide: UPF0391 membrane protein Patl_4137 (58 aa).

2 consecutive transmembrane segments (helical) span residues 4–24 (WALT…GGIA) and 27–47 (AAGI…LSLV).

This sequence belongs to the UPF0391 family.

The protein localises to the cell membrane. The sequence is that of UPF0391 membrane protein Patl_4137 from Pseudoalteromonas atlantica (strain T6c / ATCC BAA-1087).